Consider the following 233-residue polypeptide: Orotidine 5'-phosphate decarboxylase (233 aa).

Substrate-binding positions include aspartate 12, lysine 34, 61-70 (DLKFHDIPNT), threonine 120, arginine 181, glutamine 190, glycine 210, and arginine 211. Lysine 63 serves as the catalytic Proton donor.

The protein belongs to the OMP decarboxylase family. Type 1 subfamily. Homodimer.

The enzyme catalyses orotidine 5'-phosphate + H(+) = UMP + CO2. It participates in pyrimidine metabolism; UMP biosynthesis via de novo pathway; UMP from orotate: step 2/2. Functionally, catalyzes the decarboxylation of orotidine 5'-monophosphate (OMP) to uridine 5'-monophosphate (UMP). The protein is Orotidine 5'-phosphate decarboxylase of Hahella chejuensis (strain KCTC 2396).